The primary structure comprises 543 residues: Chaperonin GroEL (543 aa).

ATP-binding positions include 29–32 (TLGP), Lys-50, 86–90 (DGTTT), Gly-415, and Asp-495.

Belongs to the chaperonin (HSP60) family. Forms a cylinder of 14 subunits composed of two heptameric rings stacked back-to-back. Interacts with the co-chaperonin GroES.

Its subcellular location is the cytoplasm. The catalysed reaction is ATP + H2O + a folded polypeptide = ADP + phosphate + an unfolded polypeptide.. Together with its co-chaperonin GroES, plays an essential role in assisting protein folding. The GroEL-GroES system forms a nano-cage that allows encapsulation of the non-native substrate proteins and provides a physical environment optimized to promote and accelerate protein folding. The protein is Chaperonin GroEL of Flavobacterium johnsoniae (strain ATCC 17061 / DSM 2064 / JCM 8514 / BCRC 14874 / CCUG 350202 / NBRC 14942 / NCIMB 11054 / UW101) (Cytophaga johnsonae).